The following is a 252-amino-acid chain: tRNA (guanine-N(7)-)-methyltransferase (252 aa).

The S-adenosyl-L-methionine site is built by Glu51, Asp76, Asn103, and Asp125. Asp125 is a catalytic residue. Residues Lys129, Asp159, and 199–202 (TYYE) each bind substrate.

The protein belongs to the class I-like SAM-binding methyltransferase superfamily. TrmB family.

It carries out the reaction guanosine(46) in tRNA + S-adenosyl-L-methionine = N(7)-methylguanosine(46) in tRNA + S-adenosyl-L-homocysteine. It participates in tRNA modification; N(7)-methylguanine-tRNA biosynthesis. Its function is as follows. Catalyzes the formation of N(7)-methylguanine at position 46 (m7G46) in tRNA. The sequence is that of tRNA (guanine-N(7)-)-methyltransferase from Bacteroides thetaiotaomicron (strain ATCC 29148 / DSM 2079 / JCM 5827 / CCUG 10774 / NCTC 10582 / VPI-5482 / E50).